The primary structure comprises 141 residues: U-scoloptoxin(17)-Er3a (141 aa).

The first 21 residues, M1–A21, serve as a signal peptide directing secretion.

The protein belongs to the scoloptoxin-17 family. Contains 3 disulfide bonds. As to expression, expressed by the venom gland.

The protein localises to the secreted. In Ethmostigmus rubripes (Giant centipede), this protein is U-scoloptoxin(17)-Er3a.